A 355-amino-acid chain; its full sequence is uncharacterized protein (355 aa).

Transmembrane regions (helical) follow at residues 275–295, 301–321, and 330–350; these read SLIV…FVAF, WNSI…VVGV, and IAST…PLAL.

To M.tuberculosis Rv0497.

The protein localises to the cell membrane. This is an uncharacterized protein from Mycobacterium leprae (strain TN).